A 310-amino-acid chain; its full sequence is Protein BIG GRAIN 1 (310 aa).

A disordered region spans residues 81 to 141; it reads RAPGPHATTS…KKAKKPGASI (61 aa). Positions 90-106 are enriched in low complexity; it reads SSSSECSSYGGFSSSEA.

It belongs to the BIG GRAIN 1 (BG1) plant protein family.

It localises to the cell membrane. Functionally, involved in auxin transport. Positive regulator of the auxin signaling pathway involved in gravitropism, plant growth and grain development. This is Protein BIG GRAIN 1 from Oryza sativa subsp. indica (Rice).